Reading from the N-terminus, the 441-residue chain is Acidic phosphoprotein (441 aa).

The segment at residues 1–15 (MKAISLGLISSIIFS) is a signal peptide (or 24). Residues asparagine 21 and asparagine 112 are each glycosylated (N-linked (GlcNAc...) asparagine). Repeat copies occupy residues 186-193 (EEDPYLLQ), 194-201 (EEDALSLM), 202-209 (EYDAETLN), 210-217 (EGDAETLN), 218-225 (EGDAETLN), 226-233 (EYDAGTLN), 234-241 (EEDAGTTN), 242-249 (EAGEGTTN), 250-257 (EEGEGAAN), 258-265 (EYDAETLN), 266-273 (EYDADTLN), 274-281 (EYDAGTLN), 282-289 (EYDAGTLN), 290-297 (EEEGSTTN), 298-305 (EAGEGTSN), 306-313 (EAGEGTAN), 353-360 (KGNENEGE), and 361-368 (QKGNENEG). Residues 186–313 (EEDPYLLQEE…SNEAGEGTAN (128 aa)) are 16 X 8 AA tandem repeats. Residues 232-416 (LNEEDAGTTN…EKEKKKEKKV (185 aa)) are disordered. The span at 238–247 (GTTNEAGEGT) shows a compositional bias: low complexity. The segment covering 248-273 (TNEEGEGAANEYDAETLNEYDADTLN) has biased composition (acidic residues). The segment covering 294-306 (STTNEAGEGTSNE) has biased composition (polar residues). Positions 312–332 (ANDDEELDEEVASIFDDDEHA) are enriched in acidic residues. Positions 349 to 371 (ENVKKGNENEGEQKGNENEGEQK) are enriched in basic and acidic residues. The tract at residues 353–370 (KGNENEGEQKGNENEGEQ) is 2 X 9 AA tandem repeats. Residues 372 to 415 (GKKKKAKEKSKKKVKNKPTMTTKKKKKKEKKKKKKEKEKKKEKK) are compositionally biased toward basic residues.

The protein resides in the cell membrane. Its function is as follows. During infection, this phosphoprotein probably modulates the structure of the red cell membrane to the advantage of the parasite, although its precise function is not known. The protein is Acidic phosphoprotein (PCEMA1) of Plasmodium chabaudi.